A 430-amino-acid chain; its full sequence is Methylenetetrahydrofolate--tRNA-(uracil-5-)-methyltransferase TrmFO (430 aa).

9–14 contacts FAD; it reads GAGLAG.

This sequence belongs to the MnmG family. TrmFO subfamily. It depends on FAD as a cofactor.

It localises to the cytoplasm. The catalysed reaction is uridine(54) in tRNA + (6R)-5,10-methylene-5,6,7,8-tetrahydrofolate + NADH + H(+) = 5-methyluridine(54) in tRNA + (6S)-5,6,7,8-tetrahydrofolate + NAD(+). The enzyme catalyses uridine(54) in tRNA + (6R)-5,10-methylene-5,6,7,8-tetrahydrofolate + NADPH + H(+) = 5-methyluridine(54) in tRNA + (6S)-5,6,7,8-tetrahydrofolate + NADP(+). Catalyzes the folate-dependent formation of 5-methyl-uridine at position 54 (M-5-U54) in all tRNAs. This is Methylenetetrahydrofolate--tRNA-(uracil-5-)-methyltransferase TrmFO from Fervidobacterium nodosum (strain ATCC 35602 / DSM 5306 / Rt17-B1).